Consider the following 73-residue polypeptide: Translational regulator CsrA (73 aa).

The protein belongs to the CsrA/RsmA family. In terms of assembly, homodimer; the beta-strands of each monomer intercalate to form a hydrophobic core, while the alpha-helices form wings that extend away from the core.

The protein resides in the cytoplasm. A translational regulator that binds mRNA to regulate translation initiation and/or mRNA stability. Usually binds in the 5'-UTR at or near the Shine-Dalgarno sequence preventing ribosome-binding, thus repressing translation. Its main target seems to be the major flagellin gene, while its function is anatagonized by FliW. The sequence is that of Translational regulator CsrA from Thermosipho africanus (strain TCF52B).